Reading from the N-terminus, the 386-residue chain is Na(+)/H(+) antiporter NhaA (386 aa).

A run of 11 helical transmembrane segments spans residues 10 to 30, 58 to 78, 94 to 114, 124 to 144, 154 to 174, 176 to 196, 199 to 219, 253 to 273, 283 to 303, 327 to 347, and 361 to 381; these read MGSA…IFAN, LLHW…GLEV, IFPA…YYLI, GWAI…ALLG, FLLA…AVFF, EELS…LITL, MKVG…AAVL, ILTP…NAGV, IFST…PLGV, VFAI…LAGL, and LSRL…YLLL.

Belongs to the NhaA Na(+)/H(+) (TC 2.A.33) antiporter family.

It localises to the cell inner membrane. The catalysed reaction is Na(+)(in) + 2 H(+)(out) = Na(+)(out) + 2 H(+)(in). Its function is as follows. Na(+)/H(+) antiporter that extrudes sodium in exchange for external protons. The polypeptide is Na(+)/H(+) antiporter NhaA (Mannheimia succiniciproducens (strain KCTC 0769BP / MBEL55E)).